Here is a 127-residue protein sequence, read N- to C-terminus: Small ribosomal subunit protein uS13 (127 aa).

A disordered region spans residues 100-127 (GQRTRTNARTRKGVRKTVAGKKKAPAKK). Basic residues predominate over residues 101 to 127 (QRTRTNARTRKGVRKTVAGKKKAPAKK).

The protein belongs to the universal ribosomal protein uS13 family. As to quaternary structure, part of the 30S ribosomal subunit. Forms a loose heterodimer with protein S19. Forms two bridges to the 50S subunit in the 70S ribosome.

Functionally, located at the top of the head of the 30S subunit, it contacts several helices of the 16S rRNA. In the 70S ribosome it contacts the 23S rRNA (bridge B1a) and protein L5 of the 50S subunit (bridge B1b), connecting the 2 subunits; these bridges are implicated in subunit movement. Contacts the tRNAs in the A and P-sites. In Synechococcus sp. (strain JA-3-3Ab) (Cyanobacteria bacterium Yellowstone A-Prime), this protein is Small ribosomal subunit protein uS13.